Here is a 187-residue protein sequence, read N- to C-terminus: MLYNKEQGTSGASSSGRRTKFHFDRFVQMVLFIAANPNYCCSVASIPKSGVTPDLKRADILEQKIKSLNSALSPKLKEESRLGGPLHNPSILPAPSFSSLPISSNGKKSLAGYRPKSRKKQTILPNGQPKECATCGDTWTSQWRSGPNGNVELCSRCGIAYRKKMEKKIRSQQSSDDGTKNFIFKNK.

2 disordered regions span residues 106–127 and 167–187; these read GKKS…LPNG and KKIR…FKNK. A GATA-type zinc finger spans residues 126–180; it reads NGQPKECATCGDTWTSQWRSGPNGNVELCSRCGIAYRKKMEKKIRSQQSSDDGTK.

Its function is as follows. Involved in morphogenesis. May be involved in cell wall organization and biogenesis. In Saccharomyces cerevisiae (strain ATCC 204508 / S288c) (Baker's yeast), this protein is Protein ECM23 (ECM23).